A 57-amino-acid chain; its full sequence is Conotoxin Cal6.34 (57 aa).

A signal peptide spans 1–22 (MKLTCVLIVAVLILTACQVIAA). Intrachain disulfides connect Cys26–Cys37, Cys29–Cys43, and Cys36–Cys54.

It belongs to the conotoxin O1 superfamily. Expressed by the venom duct.

Its subcellular location is the secreted. Functionally, probable neurotoxin. This Californiconus californicus (California cone) protein is Conotoxin Cal6.34.